Here is a 234-residue protein sequence, read N- to C-terminus: Large ribosomal subunit protein uL1 (234 aa).

Belongs to the universal ribosomal protein uL1 family. Part of the 50S ribosomal subunit.

Its function is as follows. Binds directly to 23S rRNA. The L1 stalk is quite mobile in the ribosome, and is involved in E site tRNA release. In terms of biological role, protein L1 is also a translational repressor protein, it controls the translation of the L11 operon by binding to its mRNA. This is Large ribosomal subunit protein uL1 from Helicobacter pylori (strain Shi470).